A 227-amino-acid polypeptide reads, in one-letter code: uncharacterized protein (227 aa).

The helical transmembrane segment at isoleucine 7–leucine 26 threads the bilayer.

It is found in the membrane. This is an uncharacterized protein from Haemophilus influenzae (strain ATCC 51907 / DSM 11121 / KW20 / Rd).